The sequence spans 358 residues: GDSL esterase/lipase At2g30220 (358 aa).

Residues 1 to 22 form the signal peptide; it reads MYISKTIVFGLFVATLLVSCNA. N25 is a glycosylation site (N-linked (GlcNAc...) asparagine). S40 acts as the Nucleophile in catalysis. N-linked (GlcNAc...) asparagine glycosylation is found at N102 and N324. Catalysis depends on residues D332 and H335.

This sequence belongs to the 'GDSL' lipolytic enzyme family.

The protein localises to the secreted. This Arabidopsis thaliana (Mouse-ear cress) protein is GDSL esterase/lipase At2g30220.